A 295-amino-acid chain; its full sequence is Cell shape-determining protein MreC (295 aa).

An N-terminal signal peptide occupies residues 1–34 (MPQFFLNKRLIILLISIIVLVALVGFSLRDRENA). Positions 66-112 (VVDLKNTYTENQHLKERLEELAQLESEVADLKKENKDLKESLDITDS) form a coiled coil. The disordered stretch occupies residues 276 to 295 (SAEAGTTDDDTTSSDTTGGQ).

Belongs to the MreC family. In terms of assembly, homooligomer of 24 subunits, arranged as 12 dimers.

In terms of biological role, involved in formation and maintenance of cell shape. This is Cell shape-determining protein MreC from Listeria monocytogenes serovar 1/2a (strain ATCC BAA-679 / EGD-e).